Consider the following 650-residue polypeptide: Fructose-1,6-bisphosphatase class 3 (650 aa).

This sequence belongs to the FBPase class 3 family. Requires Mn(2+) as cofactor.

It carries out the reaction beta-D-fructose 1,6-bisphosphate + H2O = beta-D-fructose 6-phosphate + phosphate. It participates in carbohydrate biosynthesis; gluconeogenesis. The protein is Fructose-1,6-bisphosphatase class 3 of Finegoldia magna (strain ATCC 29328 / DSM 20472 / WAL 2508) (Peptostreptococcus magnus).